The primary structure comprises 102 residues: NADH-quinone oxidoreductase subunit K (102 aa).

3 helical membrane passes run 5-25 (LGHF…GIFL), 31-51 (IVLL…FVAF), and 62-82 (IFVF…LALL).

This sequence belongs to the complex I subunit 4L family. In terms of assembly, NDH-1 is composed of 14 different subunits. Subunits NuoA, H, J, K, L, M, N constitute the membrane sector of the complex.

The protein localises to the cell inner membrane. The catalysed reaction is a quinone + NADH + 5 H(+)(in) = a quinol + NAD(+) + 4 H(+)(out). In terms of biological role, NDH-1 shuttles electrons from NADH, via FMN and iron-sulfur (Fe-S) centers, to quinones in the respiratory chain. The immediate electron acceptor for the enzyme in this species is believed to be ubiquinone. Couples the redox reaction to proton translocation (for every two electrons transferred, four hydrogen ions are translocated across the cytoplasmic membrane), and thus conserves the redox energy in a proton gradient. The polypeptide is NADH-quinone oxidoreductase subunit K (Variovorax paradoxus (strain S110)).